The following is a 171-amino-acid chain: Transcription antitermination protein NusB (171 aa).

This sequence belongs to the NusB family.

Its function is as follows. Involved in transcription antitermination. Required for transcription of ribosomal RNA (rRNA) genes. Binds specifically to the boxA antiterminator sequence of the ribosomal RNA (rrn) operons. The sequence is that of Transcription antitermination protein NusB from Brucella suis (strain ATCC 23445 / NCTC 10510).